Consider the following 749-residue polypeptide: Adenosylcobalamin-dependent ribonucleoside-triphosphate reductase (749 aa).

Cys-124 and Cys-427 form a disulfide bridge. Positions 152–163 are effector region-1; it reads SMPFSFMFDQLM. Residues 173 to 321 are effector region-2; the sequence is TPNNVHQMPV…MGNMIGKTVV (149 aa). Catalysis depends on residues Cys-416 and Glu-418. The tract at residues 573-634 is adenosylcobalamin-binding-1; sequence FHYARYLIQR…EPAFASAGEV (62 aa). The interval 693–734 is adenosylcobalamin-binding-2; it reads FKQAPKEPIDAATYDAKCQEITADVAEKFAAMTGNHDQKDIE.

The protein belongs to the class II ribonucleoside-triphosphate reductase family. In terms of assembly, monomer. The cofactor is adenosylcob(III)alamin.

It carries out the reaction a 2'-deoxyribonucleoside 5'-triphosphate + [thioredoxin]-disulfide + H2O = a ribonucleoside 5'-triphosphate + [thioredoxin]-dithiol. Its activity is regulated as follows. Allosterically regulated by ATP and dNTP. The sequence is that of Adenosylcobalamin-dependent ribonucleoside-triphosphate reductase (rtpR) from Levilactobacillus brevis (strain ATCC 367 / BCRC 12310 / CIP 105137 / JCM 1170 / LMG 11437 / NCIMB 947 / NCTC 947) (Lactobacillus brevis).